The chain runs to 752 residues: Cytosolic phospholipase A2 (752 aa).

Residues 1 to 178 (MSFIDPYQHI…MKKLLGPKKS (178 aa)) form a phospholipid binding region. Ser-2 carries the phosphoserine modification. Positions 6–122 (PYQHIIVEHQ…KVGEKKEVPF (117 aa)) constitute a C2 domain. Ca(2+)-binding residues include Asp-40, Thr-41, Asp-43, Asn-65, Asp-93, Ala-94, and Asn-95. The 601-residue stretch at 140 to 740 (SCPDLRFSMA…SNVEARKFFN (601 aa)) folds into the PLA2c domain. The Nucleophile role is filled by Ser-228. Position 268 is a phosphothreonine (Thr-268). Positions 427-457 (KHIVSNDSSDSDDEAQGPKGTENEDAEREYQ) are disordered. A phosphoserine mark is found at Ser-434, Ser-435, and Ser-437. Ser-505 carries the post-translational modification Phosphoserine; by MAPK. Residues Ser-511 and Ser-515 each carry the phosphoserine modification. A Glycyl lysine isopeptide (Lys-Gly) (interchain with G-Cter in SUMO2) cross-link involves residue Lys-541. Catalysis depends on Asp-549, which acts as the Proton acceptor. Lys-606 is covalently cross-linked (Glycyl lysine isopeptide (Lys-Gly) (interchain with G-Cter in SUMO2)). Phosphoserine is present on residues Ser-727 and Ser-729.

As to quaternary structure, interacts with KAT5. In terms of processing, phosphorylated at both Ser-505 and Ser-727 in response to mitogenic stimuli. As to expression, in brain tissue, expressed in low levels in olfactory mitral and granule cells, in hippocampal pyramidal cells and in dentate and cerebellar granule cells.

Its subcellular location is the cytoplasm. It localises to the golgi apparatus membrane. It is found in the nucleus envelope. It catalyses the reaction a 1,2-diacyl-sn-glycero-3-phosphocholine + H2O = a 1-acyl-sn-glycero-3-phosphocholine + a fatty acid + H(+). The enzyme catalyses a 1-O-alkyl-2-acyl-sn-glycero-3-phosphocholine + H2O = a 1-O-alkyl-sn-glycero-3-phosphocholine + a fatty acid + H(+). The catalysed reaction is a 1-acyl-sn-glycero-3-phosphocholine + H2O = sn-glycerol 3-phosphocholine + a fatty acid + H(+). It carries out the reaction 1-hexadecanoyl-2-(5Z,8Z,11Z,14Z-eicosatetraenoyl)-sn-glycero-3-phosphocholine + H2O = 1-hexadecanoyl-sn-glycero-3-phosphocholine + (5Z,8Z,11Z,14Z)-eicosatetraenoate + H(+). It catalyses the reaction 1,2-di-(5Z,8Z,11Z,14Z-eicosatetraenoyl)-sn-glycero-3-phosphocholine + H2O = 1-(5Z,8Z,11Z,14Z-eicosatetraenoyl)-sn-glycero-3-phosphocholine + (5Z,8Z,11Z,14Z)-eicosatetraenoate + H(+). The enzyme catalyses 1-octadecanoyl-2-(5Z,8Z,11Z,14Z-eicosatetraenoyl)-sn-glycero-3-phosphocholine + H2O = 1-octadecanoyl-sn-glycero-3-phosphocholine + (5Z,8Z,11Z,14Z)-eicosatetraenoate + H(+). The catalysed reaction is 1-hexadecanoyl-2-(9Z,12Z-octadecadienoyl)-sn-glycero-3-phosphocholine + H2O = (9Z,12Z)-octadecadienoate + 1-hexadecanoyl-sn-glycero-3-phosphocholine + H(+). It carries out the reaction 1-octadecanoyl-2-(9Z,12Z,15Z-octadecatrienoyl)-sn-glycero-3-phosphocholine + H2O = (9Z,12Z,15Z)-octadecatrienoate + 1-octadecanoyl-sn-glycero-3-phosphocholine + H(+). It catalyses the reaction 1-(5Z,8Z,11Z,14Z-eicosatetraenoyl)-2-hexadecanoyl-sn-glycero-3-phosphocholine + H2O = 1-(5Z,8Z,11Z,14Z-eicosatetraenoyl)-sn-glycero-3-phosphocholine + hexadecanoate + H(+). The enzyme catalyses 1-O-hexadecyl-2-(5Z,8Z,11Z,14Z)-eicosatetraenoyl-sn-glycero-3-phosphocholine + H2O = 1-O-hexadecyl-sn-glycero-3-phosphocholine + (5Z,8Z,11Z,14Z)-eicosatetraenoate + H(+). The catalysed reaction is 1,2-di-(9Z-octadecenoyl)-sn-glycero-3-phospho-(1'-sn-glycerol) + H2O = 1-(9Z-octadecenoyl)-sn-glycero-3-phospho-(1'-sn-glycerol) + (9Z)-octadecenoate + H(+). It carries out the reaction 1-octadecanoyl-2-(5Z,8Z,11Z,14Z-eicosatetraenoyl)-sn-glycero-3-phosphate + H2O = 1-octadecanoyl-sn-glycero-3-phosphate + (5Z,8Z,11Z,14Z)-eicosatetraenoate + H(+). It catalyses the reaction 1-hexadecanoyl-sn-glycero-3-phosphocholine + H2O = sn-glycerol 3-phosphocholine + hexadecanoate + H(+). The enzyme catalyses 2-(prostaglandin E2)-sn-glycero-3-phosphoethanolamine + H2O = sn-glycero-3-phosphoethanolamine + prostaglandin E2 + H(+). The catalysed reaction is 2-[(15S)-hydroxy-(5Z,8Z,11Z,13E)-eicosatetraenoyl]-sn-glycero-3-phosphocholine + H2O = (15S)-hydroxy-(5Z,8Z,11Z,13E)-eicosatetraenoate + sn-glycerol 3-phosphocholine + H(+). It carries out the reaction 2-[(15R)-hydroxy-(5Z,8Z,11Z,13E)-eicosatetraenoyl]-sn-glycero-3-phosphocholine + H2O = (15R)-hydroxy-(5Z,8Z,11Z,13E)-eicosatetraenoate + sn-glycerol 3-phosphocholine + H(+). It catalyses the reaction 2-(prostaglandin E2)-sn-glycero-3-phosphocholine + H2O = prostaglandin E2 + sn-glycerol 3-phosphocholine + H(+). The enzyme catalyses 2-[(11R)-hydroxy-(5Z,8Z,12E,14Z)-eicosatetraenoyl]-sn-glycero-3-phosphocholine + H2O = (11R)-hydroxy-(5Z,8Z,12E,14Z)-eicosatetraenoate + sn-glycerol 3-phosphocholine + H(+). The catalysed reaction is 1-(5Z,8Z,11Z,14Z-eicosatetraenoyl)-2-O-hexadecyl-sn-glycero-3-phosphocholine + H2O = 2-O-hexadecyl-sn-glycero-3-phosphocholine + (5Z,8Z,11Z,14Z)-eicosatetraenoate + H(+). It carries out the reaction 1-octadecanoyl-2-(5Z,8Z,11Z,14Z-eicosatetraenoyl)-sn-glycero-3-phosphocholine + glycerol = 1-(5Z,8Z,11Z,14Z-eicosatetraenoyl)-glycerol + 1-octadecanoyl-sn-glycero-3-phosphocholine. It catalyses the reaction 1-octadecanoyl-2-(9Z,12Z,15Z-octadecatrienoyl)-sn-glycero-3-phosphocholine + glycerol = 1-(9Z,12Z,15Z-octadecatrienoyl)-glycerol + 1-octadecanoyl-sn-glycero-3-phosphocholine. It functions in the pathway lipid metabolism; arachidonate metabolism. The protein operates within membrane lipid metabolism; glycerophospholipid metabolism. It participates in lipid metabolism; prostaglandin biosynthesis. Its pathway is lipid metabolism; leukotriene B4 biosynthesis. Its activity is regulated as follows. Activated by cytosolic calcium, which is necessary for binding to membrane lipids. Activated by phosphorylation in response to mitogenic stimuli. In terms of biological role, has primarily calcium-dependent phospholipase and lysophospholipase activities, with a major role in membrane lipid remodeling and biosynthesis of lipid mediators of the inflammatory response. Plays an important role in embryo implantation and parturition through its ability to trigger prostanoid production. Preferentially hydrolyzes the ester bond of the fatty acyl group attached at sn-2 position of phospholipids (phospholipase A2 activity). Selectively hydrolyzes sn-2 arachidonoyl group from membrane phospholipids, providing the precursor for eicosanoid biosynthesis via the cyclooxygenase pathway. In an alternative pathway of eicosanoid biosynthesis, hydrolyzes sn-2 fatty acyl chain of eicosanoid lysophopholipids to release free bioactive eicosanoids. Hydrolyzes the ester bond of the fatty acyl group attached at sn-1 position of phospholipids (phospholipase A1 activity) only if an ether linkage rather than an ester linkage is present at the sn-2 position. This hydrolysis is not stereospecific. Has calcium-independent phospholipase A2 and lysophospholipase activities in the presence of phosphoinositides. Has O-acyltransferase activity. Catalyzes the transfer of fatty acyl chains from phospholipids to a primary hydroxyl group of glycerol (sn-1 or sn-3), potentially contributing to monoacylglycerol synthesis. This chain is Cytosolic phospholipase A2 (Pla2g4a), found in Rattus norvegicus (Rat).